The sequence spans 49 residues: Peridinin-chlorophyll a-binding protein (49 aa).

Monomer. Post-translationally, binds 12 peridinin and 2 chlorophyll a molecules per monomer.

It localises to the plastid. The protein localises to the chloroplast. In terms of biological role, water-soluble antenna for capture of solar energy in the blue-green range. Peridinin is an asymmetric carotenoid. The sequence is that of Peridinin-chlorophyll a-binding protein from Alexandrium cohorticula (Dinoflagellate).